We begin with the raw amino-acid sequence, 354 residues long: Protein YGP1 (354 aa).

Residues 1 to 19 form the signal peptide; the sequence is MKFQVVLSALLACSSAVVA. The propeptide occupies 20 to 37; it reads SPIENLFKYRAVKASHSK. N-linked (GlcNAc...) asparagine glycans are attached at residues N40, N50, N53, N58, N61, N65, N87, N94, N100, N106, N118, N172, N239, and N286. An Asparaginase/glutaminase domain is found at 50–354; the sequence is NSSNVTYANG…SKSALESIFP (305 aa).

The protein to yeast sporulation-specific protein SPS100. Post-translationally, extensively N-glycosylated.

It localises to the secreted. Its function is as follows. May be involved in cellular adaptations prior to stationary phase. The chain is Protein YGP1 (YGP1) from Saccharomyces cerevisiae (strain ATCC 204508 / S288c) (Baker's yeast).